The following is a 32-amino-acid chain: Delta-conotoxin-like MVID (32 aa).

Disulfide bonds link cysteine 3/cysteine 18, cysteine 10/cysteine 22, and cysteine 17/cysteine 27. Proline 14 carries the post-translational modification 4-hydroxyproline.

Belongs to the conotoxin O1 superfamily. Expressed by the venom duct.

The protein resides in the secreted. Functionally, delta-conotoxins bind to site 6 of voltage-gated sodium channels (Nav) and inhibit the inactivation process. This Conus magus (Magical cone) protein is Delta-conotoxin-like MVID.